Reading from the N-terminus, the 149-residue chain is Calmodulin-B (149 aa).

N-acetylalanine is present on Ala-2. EF-hand domains follow at residues 8–43, 44–79, 81–116, and 117–149; these read EQIA…LGQN, PTEA…KMKE, DSEE…LGEK, and LTDE…MTCK. Positions 21, 23, 25, 27, 32, 57, 59, 61, 63, 68, 94, 96, 98, and 105 each coordinate Ca(2+). Lys-116 is modified (N6,N6,N6-trimethyllysine). Ca(2+) is bound by residues Asp-130, Asp-132, Asp-134, Gln-136, and Glu-141.

It belongs to the calmodulin family.

Calmodulin mediates the control of a large number of enzymes, ion channels and other proteins by Ca(2+). Among the enzymes to be stimulated by the calmodulin-Ca(2+) complex are a number of protein kinases and phosphatases. The protein is Calmodulin-B of Halocynthia roretzi (Sea squirt).